Consider the following 120-residue polypeptide: Photosystem II extrinsic protein U (120 aa).

A signal peptide spans 1–29 (MKRLLSLLTGVLVMTGLLMALIFPQSAYA).

It belongs to the PsbU family. As to quaternary structure, PSII is composed of 1 copy each of membrane proteins PsbA, PsbB, PsbC, PsbD, PsbE, PsbF, PsbH, PsbI, PsbJ, PsbK, PsbL, PsbM, PsbT, PsbX, PsbY, Psb30/Ycf12, peripheral proteins PsbO, CyanoQ (PsbQ), PsbU, PsbV and a large number of cofactors. It forms dimeric complexes.

Its subcellular location is the cellular thylakoid membrane. In terms of biological role, one of the extrinsic, lumenal subunits of photosystem II (PSII). PSII is a light-driven water plastoquinone oxidoreductase, using light energy to abstract electrons from H(2)O, generating a proton gradient subsequently used for ATP formation. The extrinsic proteins stabilize the structure of photosystem II oxygen-evolving complex (OEC), the ion environment of oxygen evolution and protect the OEC against heat-induced inactivation. This is Photosystem II extrinsic protein U from Prochlorococcus marinus (strain MIT 9313).